Consider the following 677-residue polypeptide: Mitochondrial 15S rRNA processing factor ppr3 (677 aa).

The transit peptide at 1–43 directs the protein to the mitochondrion; sequence MFTEICGKLRTCIYKKVAFSRPLGCNLRQLPVFRDFHNSVSCL. PPR repeat units lie at residues 210–244, 245–279, 280–314, 317–351, 355–390, and 569–604; these read SVYL…QLKP, DNYT…KIEA, NTHV…SLQS, DDKT…PINP, SSRT…QWKP, and DIHV…SYLP.

The protein belongs to the CCM1 family. As to quaternary structure, binds to mitochondrial small subunit 15S rRNA.

The protein localises to the mitochondrion. Regulates mitochondrial small subunit maturation by controlling 15S rRNA 5'-end processing. Localizes to the 5' precursor of the 15S rRNA in a position that is subsequently occupied by mS47 in the mature yeast mtSSU. Uses structure and sequence-specific RNA recognition, binding to a single-stranded region of the precursor and specifically recognizing bases -6 to -1. The exchange of Ccm1 for mS47 is coupled to the irreversible removal of precursor rRNA that is accompanied by conformational changes of the mitoribosomal proteins uS5m and mS26. These conformational changes signal completion of 5'-end rRNA processing through protection of the mature 5'-end of the 15S rRNA and stabilization of mS47. The removal of the 5' precursor together with the dissociation of Ccm1 may be catalyzed by the 5'-3' exoribonuclease Pet127. Involved in the specific removal of group I introns in mitochondrial encoded transcripts. The sequence is that of Mitochondrial 15S rRNA processing factor ppr3 (dmr1) from Schizosaccharomyces japonicus (strain yFS275 / FY16936) (Fission yeast).